The sequence spans 494 residues: Alpha-amylase B (494 aa).

The signal sequence occupies residues 1 to 18 (MFLAKSIVCLALLAVANA). Residue Gln-19 is modified to Pyrrolidone carboxylic acid. Cys-46 and Cys-102 are oxidised to a cystine. 3 residues coordinate Ca(2+): Asn-116, Arg-165, and Asp-174. An intrachain disulfide couples Cys-153 to Cys-167. Arg-202 provides a ligand contact to chloride. The active-site Nucleophile is Asp-204. His-208 serves as a coordination point for Ca(2+). The active-site Proton donor is Glu-241. The chloride site is built by Asn-304 and Arg-343. Cystine bridges form between Cys-376/Cys-382 and Cys-448/Cys-460.

Belongs to the glycosyl hydrolase 13 family. In terms of assembly, monomer. It depends on Ca(2+) as a cofactor. The cofactor is chloride.

It catalyses the reaction Endohydrolysis of (1-&gt;4)-alpha-D-glucosidic linkages in polysaccharides containing three or more (1-&gt;4)-alpha-linked D-glucose units.. This is Alpha-amylase B (Amy-d) from Drosophila yakuba (Fruit fly).